The chain runs to 89 residues: Phosphocarrier protein HPr (89 aa).

Positions 1-89 (MERTVTVVPE…DILSTPEAKQ (89 aa)) constitute an HPr domain. His-14 (pros-phosphohistidine intermediate) is an active-site residue. A Phosphoserine; by HPrK/P modification is found at Ser-47.

It belongs to the HPr family.

Its subcellular location is the cytoplasm. With respect to regulation, phosphorylation on Ser-47 inhibits the phosphoryl transfer from enzyme I to HPr. Its function is as follows. General (non sugar-specific) component of the phosphoenolpyruvate-dependent sugar phosphotransferase system (sugar PTS). This major carbohydrate active-transport system catalyzes the phosphorylation of incoming sugar substrates concomitantly with their translocation across the cell membrane. The phosphoryl group from phosphoenolpyruvate (PEP) is transferred to the phosphoryl carrier protein HPr by enzyme I. Phospho-HPr then transfers it to the PTS EIIA domain. Is involved in fructose transport. In Haloferax volcanii (strain ATCC 29605 / DSM 3757 / JCM 8879 / NBRC 14742 / NCIMB 2012 / VKM B-1768 / DS2) (Halobacterium volcanii), this protein is Phosphocarrier protein HPr (ptsH1).